We begin with the raw amino-acid sequence, 844 residues long: Beta-mannosidase B (844 aa).

Glu432 functions as the Proton donor in the catalytic mechanism.

Belongs to the glycosyl hydrolase 2 family. Beta-mannosidase B subfamily.

It carries out the reaction Hydrolysis of terminal, non-reducing beta-D-mannose residues in beta-D-mannosides.. It functions in the pathway glycan metabolism; N-glycan degradation. Exoglycosidase that cleaves the single beta-linked mannose residue from the non-reducing end of beta-mannosidic oligosaccharides of various complexity and length. Prefers mannobiose over mannotriose and has no activity against polymeric mannan. Is also severely restricted by galactosyl substitutions at the +1 subsite. The polypeptide is Beta-mannosidase B (mndB) (Aspergillus oryzae (strain ATCC 42149 / RIB 40) (Yellow koji mold)).